The sequence spans 602 residues: DEAD-box ATP-dependent RNA helicase 52A (602 aa).

Residues 9-31 (KSVEAGGEPGGGGGGAWSTVSRS) are disordered. Gly residues predominate over residues 15-24 (GEPGGGGGGA). The short motif at 84-112 (DGFEAAGLVEAVLRNVARCGYESPTPVQR) is the Q motif element. The region spanning 115–305 (MPIALAGRDL…SDFLSNYIFI (191 aa)) is the Helicase ATP-binding domain. 128-135 (AQTGSGKT) is an ATP binding site. Residues 249–252 (DEAD) carry the DEAD box motif. Residues 328 to 485 (EKRGYLLDLL…DVPDWLVQYA (158 aa)) form the Helicase C-terminal domain. 2 disordered regions span residues 492–521 (GSSYGGRNRRSGGGGNRFAGRDFRQGSGGG) and 552–602 (RGGG…SGWD). Residues 552-574 (RGGGYSRGGRGGYSGGGGGGGGD) are compositionally biased toward gly residues.

This sequence belongs to the DEAD box helicase family. DDX3/DED1 subfamily.

The enzyme catalyses ATP + H2O = ADP + phosphate + H(+). In Oryza sativa subsp. japonica (Rice), this protein is DEAD-box ATP-dependent RNA helicase 52A.